The following is a 343-amino-acid chain: Protein RecA (343 aa).

64-71 (GPESSGKT) provides a ligand contact to ATP.

Belongs to the RecA family.

It localises to the cytoplasm. In terms of biological role, can catalyze the hydrolysis of ATP in the presence of single-stranded DNA, the ATP-dependent uptake of single-stranded DNA by duplex DNA, and the ATP-dependent hybridization of homologous single-stranded DNAs. It interacts with LexA causing its activation and leading to its autocatalytic cleavage. The protein is Protein RecA of Bacillus cereus (strain ATCC 10987 / NRS 248).